The sequence spans 268 residues: Thiazole synthase (268 aa).

The active-site Schiff-base intermediate with DXP is the K100. Residues G161, 187–188 (AG), and 209–210 (NT) each bind 1-deoxy-D-xylulose 5-phosphate. The interval 248-268 (ATPSSPSEGMITGSPHSAANN) is disordered.

Belongs to the ThiG family. Homotetramer. Forms heterodimers with either ThiH or ThiS.

The protein resides in the cytoplasm. It catalyses the reaction [ThiS sulfur-carrier protein]-C-terminal-Gly-aminoethanethioate + 2-iminoacetate + 1-deoxy-D-xylulose 5-phosphate = [ThiS sulfur-carrier protein]-C-terminal Gly-Gly + 2-[(2R,5Z)-2-carboxy-4-methylthiazol-5(2H)-ylidene]ethyl phosphate + 2 H2O + H(+). The protein operates within cofactor biosynthesis; thiamine diphosphate biosynthesis. Functionally, catalyzes the rearrangement of 1-deoxy-D-xylulose 5-phosphate (DXP) to produce the thiazole phosphate moiety of thiamine. Sulfur is provided by the thiocarboxylate moiety of the carrier protein ThiS. In vitro, sulfur can be provided by H(2)S. This is Thiazole synthase from Nitrosomonas eutropha (strain DSM 101675 / C91 / Nm57).